An 883-amino-acid chain; its full sequence is MVTKTIKSLNLEINFEVEDVPYEEEILRNAYSVKHWLRYIDHKAKAPNNGVNMVYERALKELPGSYKIWHNYLRTRRKQVRGKIPTDPMYEEVNSAFERALVFMHKMPRIWMDYGAFMTSQCKITRTRHVFDRALRALPITQHGRIWPLYLQFVRRFEMPETALRVYRRYLKLFPEDTEEYVDYLQEADRLDEAAQQLAHIVDNEHFVSKHGKSNHQLWNELCDLISKNPHKVHSLNVDAIIRGGLRRYTDQLGHLWNSLADYYVRSGLFDRARDIYEEAIQTVTTVRDFTQVFDEYAQFEELSLNRRMEQVAANEAATEEDDIDVELRLSRFEYLMERRLLLLNSVLLRQNPHNVHEWHKRVTLYEDKPAEIISTYTEAVQTVQPKQAVGKLHTLWVEFAKFYEANGQVEDARVVFERGTEVEYVKVEDLAAVWCEWAEMELRQQQFEAALKLMQRATAMPKRKIAYYDDTETVQARLHRSLKVWSMYADLEESFGTFKTCKAVYERIIDLKICTPQIIINYGMFLEEHNYFEEAYRAYEKGISLFKWPNVYDIWNSYLTKFLERYGGTKLERARDLFEQCLDQCPPEHAKYFYLLYAKLEEEHGLARHAMSVYDRATSAVKEDEMFDMYNIFIKKAAEIYGLPRTREIYEKAIESLPEQNMRHMCVKFAELETKLGEVDRARAIYAHCSQVCDPRITADFWQTWKEFEVRHGNEDTMREMLRIKRSVQATYNTQVNMMAAQFLSTNNGAAADAGAGAGPDAMRLLEEKARQAAAESKQKPIEKAASNIMFVRGETQGGAKDKKDTVVNPDEIDIGDSDEDDEEEDDDEENEMTNENQASAAVTKTDEEGLVMKKLRFEQKAIPAKVFGSLKPSNQGDSDGE.

HAT repeat units follow at residues 13–45, 46–78, 88–120, 122–156, 158–190, 268–303, 368–406, 463–495, 531–565, 570–604, 642–676, and 678–712; these read INFE…HKAK, APNN…TRRK, PMYE…FMTS, CKIT…FVRR, EMPE…EADR, GLFD…FEEL, DKPA…FYEA, KRKI…LEES, NYFE…KFLE, TKLE…LEEE, YGLP…LETK, and GEVD…FEVR. Disordered regions lie at residues 794–851 and 864–883; these read RGET…DEEG and IPAK…SDGE. A compositionally biased stretch (acidic residues) spans 812–834; the sequence is DEIDIGDSDEDDEEEDDDEENEM. 2 stretches are compositionally biased toward polar residues: residues 835 to 844 and 873 to 883; these read TNENQASAAV and KPSNQGDSDGE.

This sequence belongs to the crooked-neck family. In terms of assembly, component of the NTC(Nineteen)/Prp19 complex composed of at least fand, Prp19,CG9667/ISY1 and Cdc5/CDC5L. Within the complex, interacts with Prp19 and ISY1/CG9667.

It localises to the nucleus. In terms of biological role, subunit of the NTC(Nineteen)/Prp19 complex, which is part of the spliceosome. The complex participates in spliceosome assembly, its remodeling and is required for efficient spliceosome activation. Essential for efficient pre-mRNA splicing. In embryos, efficient pre-mRNA splicing of zygotic transcripts is essential during dynamic cellular processes that require rapid division and/or dramatic changes in gene expression such as blastoderm cellularization, tracheal branching morphogenesis, Malpighian morphogenesis and epidermal development. Part of its role in promoting embryo tracheal development is also due to specifically splicing bnl transcripts which results in the activation of the BNL-FGF pathway. This chain is Pre-mRNA-splicing factor syf1 homolog, found in Drosophila melanogaster (Fruit fly).